The chain runs to 2552 residues: Protein TIC 214 (2552 aa).

6 consecutive transmembrane segments (helical) span residues 15-35 (LIFG…SYLF), 54-74 (LSYG…YLPF), 78-98 (LSNF…QFFW), 119-136 (TLAF…YTFF), 154-174 (FKIL…LICI), and 243-263 (ILAT…PIPF). The segment at 304–325 (EEQKKDEKSADEEKKRAVEEEN) is disordered. Positions 305–322 (EQKKDEKSADEEKKRAVE) are enriched in basic and acidic residues. Helical transmembrane passes span 362–382 (TLYT…AFLF), 423–443 (PFLV…SVYI), and 452–472 (FLFN…HFFF). The tract at residues 2045-2077 (MKAEEQKKIDEEYEEKKEKRKKEQEEQGKAFDE) is disordered. Positions 2416–2511 (RRRRQLRIVN…IKKKLMRLRF (96 aa)) form a coiled coil.

The protein belongs to the TIC214 family. Part of the Tic complex.

It is found in the plastid. The protein resides in the chloroplast inner membrane. Its function is as follows. Involved in protein precursor import into chloroplasts. May be part of an intermediate translocation complex acting as a protein-conducting channel at the inner envelope. This is Protein TIC 214 from Pelargonium hortorum (Common geranium).